Consider the following 379-residue polypeptide: Cytochrome b (379 aa).

Helical transmembrane passes span 33 to 53 (FGSL…FLDM), 77 to 98 (WLIR…YLHI), 113 to 133 (WNIG…GYVL), and 178 to 198 (FFAF…VHLL). 2 residues coordinate heme b: His83 and His97. Heme b contacts are provided by His182 and His196. His201 is a binding site for a ubiquinone. A run of 4 helical transmembrane segments spans residues 226 to 246 (TKDF…VPFF), 288 to 308 (LGGV…PHIQ), 320 to 340 (ISQF…WIGG), and 347 to 367 (FIII…VLMP).

The protein belongs to the cytochrome b family. The cytochrome bc1 complex contains 11 subunits: 3 respiratory subunits (MT-CYB, CYC1 and UQCRFS1), 2 core proteins (UQCRC1 and UQCRC2) and 6 low-molecular weight proteins (UQCRH/QCR6, UQCRB/QCR7, UQCRQ/QCR8, UQCR10/QCR9, UQCR11/QCR10 and a cleavage product of UQCRFS1). This cytochrome bc1 complex then forms a dimer. It depends on heme b as a cofactor.

The protein localises to the mitochondrion inner membrane. Its function is as follows. Component of the ubiquinol-cytochrome c reductase complex (complex III or cytochrome b-c1 complex) that is part of the mitochondrial respiratory chain. The b-c1 complex mediates electron transfer from ubiquinol to cytochrome c. Contributes to the generation of a proton gradient across the mitochondrial membrane that is then used for ATP synthesis. This is Cytochrome b (MT-CYB) from Dipodomys nelsoni (Nelson's kangaroo rat).